The following is a 216-amino-acid chain: ATP-dependent Clp protease proteolytic subunit (216 aa).

The active-site Nucleophile is Ser109. Residue His134 is part of the active site.

The protein belongs to the peptidase S14 family. In terms of assembly, fourteen ClpP subunits assemble into 2 heptameric rings which stack back to back to give a disk-like structure with a central cavity, resembling the structure of eukaryotic proteasomes.

The protein resides in the cytoplasm. It carries out the reaction Hydrolysis of proteins to small peptides in the presence of ATP and magnesium. alpha-casein is the usual test substrate. In the absence of ATP, only oligopeptides shorter than five residues are hydrolyzed (such as succinyl-Leu-Tyr-|-NHMec, and Leu-Tyr-Leu-|-Tyr-Trp, in which cleavage of the -Tyr-|-Leu- and -Tyr-|-Trp bonds also occurs).. In terms of biological role, cleaves peptides in various proteins in a process that requires ATP hydrolysis. Has a chymotrypsin-like activity. Plays a major role in the degradation of misfolded proteins. This chain is ATP-dependent Clp protease proteolytic subunit, found in Rhodospirillum rubrum (strain ATCC 11170 / ATH 1.1.1 / DSM 467 / LMG 4362 / NCIMB 8255 / S1).